The following is a 753-amino-acid chain: MESTPFNRRQWTSLSLRVTAKELSLVNKNKSSAIVEIFSKYQKAAEEANMERKKNNPESLPQHFRRGTLSVLKKKWENPVAGAEFHTDSLPNSSSEGGHTADYPPAEVTDKPAPGVRADREEHTQPKPRFGSRPEAVIQSRYPRSENSHDFKAQATESQKMENCLGDSRHEAEKPETSENTETSGKIEKYNVPLNRLKMMFEKGEHNQTKSLWTQSRNAGGRRLSENNCSLDDWEIGAGHLSSSAFNSEKNESKRNLELPRLSETSIKDRMAKYQAAVSKQSSPASYTNELKTSESKTHKWEQKENVPPGPEACSVHQEGSKVSTTENSLVALSVPAEDDTCNSQVKSEAQQPMHPKPLSPDARTSSLPESSPSKTAKKFQAPAKESCVECQKTVYPMERLLANQQVFHISCFRCSYCNNKLSLGTYASLHGRIYCKPHFNQLFKSKGNYDEGFGHKQHKDLWASKSDNEETLGRPAQPPNAGESPHSPGVEDAPIAKVGVLAASMEAKASSQREREDKPAETKKLRIAWPPPAELGGSGSALEEGIKVSKPKWPPEDDVCKTEAPEDVDLDLKKLRRSSSLKERSRPFTVAASFRTSSIKSPKASSPSLRKGWSESEQSEEFGGGIATMERKQTENARPSGEKENVGKSRWQGEEVPRSKDRSSFELESENFMENGANIAEDDNHVHAQQSPLEPEAPGWSGFVDTTAAKEFTTQNQKSQDVGFWEGEVVRELSVEEQIKRNRYYDEDEDEE.

An N-acetylmethionine modification is found at methionine 1. Phosphoserine is present on serine 15. A compositionally biased stretch (basic and acidic residues) spans 46-56; it reads EEANMERKKNN. 2 disordered regions span residues 46 to 66 and 82 to 186; these read EEAN…HFRR and GAEF…TSGK. A Phosphoserine modification is found at serine 132. Positions 143–152 are enriched in basic and acidic residues; the sequence is PRSENSHDFK. The short motif at 164–166 is the Required for interaction with NPC1L1 element; that stretch reads CLG. Positions 167 to 177 are enriched in basic and acidic residues; that stretch reads DSRHEAEKPET. 4 positions are modified to phosphoserine: serine 225, serine 230, serine 242, and serine 263. Disordered regions lie at residues 276 to 326 and 341 to 379; these read AAVS…VSTT and TCNS…TAKK. Polar residues predominate over residues 278 to 291; sequence VSKQSSPASYTNEL. A compositionally biased stretch (basic and acidic residues) spans 292–305; the sequence is KTSESKTHKWEQKE. A compositionally biased stretch (polar residues) spans 342–351; the sequence is CNSQVKSEAQ. 4 positions are modified to phosphoserine: serine 348, serine 360, serine 367, and serine 372. Residues 363-375 show a composition bias toward polar residues; it reads ARTSSLPESSPSK. Positions 386 to 446 constitute an LIM zinc-binding domain; sequence ESCVECQKTV…KPHFNQLFKS (61 aa). At lysine 437 the chain carries N6-succinyllysine. Phosphoserine is present on residues serine 467, serine 485, and serine 488. 3 disordered regions span residues 467–493, 505–669, and 682–703; these read SDNE…GVED, SMEA…FELE, and EDDN…GWSG. The required for interaction with MYO5B stretch occupies residues 491-511; that stretch reads VEDAPIAKVGVLAASMEAKAS. 2 stretches are compositionally biased toward basic and acidic residues: residues 512–525 and 554–565; these read SQRE…ETKK and WPPEDDVCKTEA. Low complexity predominate over residues 598–609; sequence SSIKSPKASSPS. Residues serine 599, serine 602, serine 607, and serine 615 each carry the phosphoserine modification. Basic and acidic residues predominate over residues 630 to 666; it reads MERKQTENARPSGEKENVGKSRWQGEEVPRSKDRSSF. A phosphoserine mark is found at serine 692, serine 720, and serine 735.

As to quaternary structure, interacts with NPC1L1; bridges NPC1L1 with MYO5B. Interacts with MYO5B; bridges MYO5B with NPC1L1. Interacts with PXN; this complex stabilizes actin dynamics. Binds to G-actin and F-actin. Interacts with LUZP1 (via C-terminus); both proteins restrict ciliation and may work together to regulate this process. Binds RAB40B (GTP-bound); interaction influences LIMA1 subcellular localization in lamellipodia during cell migration. Post-translationally, phosphorylation of the C-terminal region by MAPK1/MAPK3 reduces its association with F-actin and contributes to actin filament reorganization and enhances cell motility. Ubiquitinated by the ECS(RAB40B) complex leading to its degradation. In terms of tissue distribution, highly expressed in the small intestine, including the duodenum, jejunum, and ileum. Low expression in the liver and very low expressed in the heart, spleen, lung, brain, and pancreas. Isoform Alpha is highly expressed in embryos from day 7-11 and in adult spleen and lung. Isoform Beta expression is highest in adult kidney, testis, lung and liver, intermediate in heart, brain, spleen, skeletal muscle and low in embryos.

The protein localises to the cytoplasm. It is found in the cell junction. Its subcellular location is the focal adhesion. It localises to the cytoskeleton. The protein resides in the stress fiber. The protein localises to the cell membrane. It is found in the cell projection. Its subcellular location is the ruffle. It localises to the lamellipodium. Actin-binding protein involved in actin cytoskeleton regulation and dynamics. Increases the number and size of actin stress fibers and inhibits membrane ruffling. Inhibits actin filament depolymerization. Bundles actin filaments, delays filament nucleation and reduces formation of branched filaments. Acts as a negative regulator of primary cilium formation. Plays a role in cholesterol homeostasis. Influences plasma cholesterol levels through regulation of intestinal cholesterol absorption. May act as a scaffold protein by regulating NPC1L1 transportation, an essential protein for cholesterol absorption, to the plasma membrane by recruiting MYO5B to NPC1L1, and thus facilitates cholesterol uptake. This Mus musculus (Mouse) protein is LIM domain and actin-binding protein 1 (Lima1).